A 673-amino-acid chain; its full sequence is L-type lectin-domain containing receptor kinase SIT2 (673 aa).

The signal sequence occupies residues 1–27 (MVLPKPEMPFFVLLLFLGLGCLRPAAA). At 28-296 (TDERFVFNGF…FPKPRSKTLE (269 aa)) the chain is on the extracellular side. The interval 32 to 270 (FVFNGFTGAN…VLGWSFKMNG (239 aa)) is legume-lectin like. Residues N41, N60, N82, N118, N138, N191, N214, N235, and N276 are each glycosylated (N-linked (GlcNAc...) asparagine). The chain crosses the membrane as a helical span at residues 297 to 317 (IVLPIASAVLVFAVAAAVFVF). Topologically, residues 318–673 (MRRRRMFSEL…GTFSDLSGGR (356 aa)) are cytoplasmic. In terms of domain architecture, Protein kinase spans 352 to 631 (FSDKRLLGIG…LEGDVPLPEL (280 aa)). ATP contacts are provided by residues 358–366 (LGIGGFGRV) and K381. D477 acts as the Proton acceptor in catalysis.

This sequence in the C-terminal section; belongs to the protein kinase superfamily. Ser/Thr protein kinase family. The protein in the N-terminal section; belongs to the leguminous lectin family. Mainly expressed in root epidermal cells.

It localises to the cell membrane. The enzyme catalyses L-seryl-[protein] + ATP = O-phospho-L-seryl-[protein] + ADP + H(+). It catalyses the reaction L-threonyl-[protein] + ATP = O-phospho-L-threonyl-[protein] + ADP + H(+). Lectin-domain containing receptor kinase involved in salt stress response. Acts as a negative regulator of salt tolerance. This Oryza sativa subsp. japonica (Rice) protein is L-type lectin-domain containing receptor kinase SIT2.